The primary structure comprises 183 residues: Histone deacetylase complex subunit SAP30L (183 aa).

Methionine 1 carries the post-translational modification N-acetylmethionine. Acidic residues predominate over residues 1-10; that stretch reads MNGFSTEEDS. Positions 1 to 23 are disordered; the sequence is MNGFSTEEDSREGPPAAPAAAAP. 2 disulfides stabilise this stretch: cysteine 29-cysteine 30 and cysteine 38-cysteine 74. An Atypical zinc finger spans residues 29-77; it reads CCLIEDGERCVRPAGNASFSKRVQKSISQKKLKLDIDKSVRHLYICDFH. Lysine 49 is covalently cross-linked (Glycyl lysine isopeptide (Lys-Gly) (interchain with G-Cter in SUMO2)). Residues 85 to 105 form a disordered region; it reads RNKRKRKTSDDGGDSPEHDTD. The Nuclear localization signal (NLS) motif lies at 86–91; that stretch reads NKRKRK. The segment at 88 to 90 is important for DNA and phosphoinositide binding; sequence RKR. A Phosphothreonine modification is found at threonine 92. Serine 93 and serine 99 each carry phosphoserine. Threonine 104 bears the Phosphothreonine mark. Residues lysine 155, lysine 166, and lysine 175 each participate in a glycyl lysine isopeptide (Lys-Gly) (interchain with G-Cter in SUMO2) cross-link.

This sequence belongs to the SAP30 family. In terms of assembly, interacts with components of the histone deacetylase complex SIN3A, HDAC1 and HDAC2. Binds histones and nucleosomes. Interacts with FEZ1. Detected in brain and ovary, and at lower levels in heart, small intestine, lung, kidney, skeletal muscle, stomach and spleen (at protein level). Ubiquitous; expressed in all tissues tested with highest levels in testis.

It is found in the nucleus. The protein resides in the nucleolus. Its function is as follows. Functions as a transcription repressor, probably via its interaction with histone deacetylase complexes. Involved in the functional recruitment of the class 1 Sin3-histone deacetylase complex (HDAC) to the nucleolus. Binds DNA, apparently without sequence-specificity, and bends bound double-stranded DNA. Binds phosphoinositol phosphates (phosphoinositol 3-phosphate, phosphoinositol 4-phosphate and phosphoinositol 5-phosphate) via the same basic sequence motif that mediates DNA binding and nuclear import. In terms of biological role, functions as a transcription repressor; isoform 2 has lower transcription repressor activity than isoform 1 and isoform 3. Functions as a transcription repressor; its activity is marginally lower than that of isoform 1. This Homo sapiens (Human) protein is Histone deacetylase complex subunit SAP30L (SAP30L).